Consider the following 473-residue polypeptide: Ribulose bisphosphate carboxylase large chain (473 aa).

Asparagine 116 and threonine 166 together coordinate substrate. Lysine 168 acts as the Proton acceptor in catalysis. Position 170 (lysine 170) interacts with substrate. Residues lysine 194, aspartate 196, and glutamate 197 each coordinate Mg(2+). An N6-carboxylysine modification is found at lysine 194. Residue histidine 287 is the Proton acceptor of the active site. Positions 288, 320, and 372 each coordinate substrate.

The protein belongs to the RuBisCO large chain family. Type I subfamily. In terms of assembly, heterohexadecamer of 8 large chains and 8 small chains. Mg(2+) serves as cofactor.

The catalysed reaction is 2 (2R)-3-phosphoglycerate + 2 H(+) = D-ribulose 1,5-bisphosphate + CO2 + H2O. It carries out the reaction D-ribulose 1,5-bisphosphate + O2 = 2-phosphoglycolate + (2R)-3-phosphoglycerate + 2 H(+). Its function is as follows. RuBisCO catalyzes two reactions: the carboxylation of D-ribulose 1,5-bisphosphate, the primary event in carbon dioxide fixation, as well as the oxidative fragmentation of the pentose substrate. Both reactions occur simultaneously and in competition at the same active site. This is Ribulose bisphosphate carboxylase large chain from Methylococcus capsulatus (strain ATCC 33009 / NCIMB 11132 / Bath).